The sequence spans 232 residues: Beta-casein (232 aa).

The N-terminal stretch at 1–15 is a signal peptide; the sequence is MKVLILACRVALALA. Phosphoserine occurs at positions 30, 32, 33, and 34.

Belongs to the beta-casein family. As to expression, mammary gland specific. Secreted in milk.

It localises to the secreted. Important role in determination of the surface properties of the casein micelles. This is Beta-casein (CSN2) from Camelus dromedarius (Dromedary).